The sequence spans 216 residues: Soluble inorganic pyrophosphatase 4 (216 aa).

At serine 18 the chain carries Phosphoserine. Substrate contacts are provided by lysine 66 and arginine 80. Tyrosine 88 acts as the Proton donor in catalysis. Tyrosine 92 is a substrate binding site. Residues aspartate 102, aspartate 107, and aspartate 139 each contribute to the Mg(2+) site. Residue tyrosine 176 coordinates substrate.

It belongs to the PPase family. In terms of assembly, monomer. The cofactor is Mg(2+). As to expression, ubiquitous, excepted in pollen. Very low expression in cork, xylem and hypocotyls.

It is found in the cytoplasm. It carries out the reaction diphosphate + H2O = 2 phosphate + H(+). Inhibited by Zn(2+), Ca(2+), Ba(2+), Fe(2+), Co(2+), Cu(2+), Eu(2+), Eu(3+) and Mn(2+). Functionally, catalyzes the irreversible hydrolysis of pyrophosphate (PPi) to phosphate. The MgPPi(2-) complex binds to the enzyme only after a free Mg(2+) ion has bound. No activity with glycerol-3-phosphate, glucose-6-phosphate, p-nitrophenylphosphate, ADP, NADP(+), NAD(+),NADH, NADPH or phosphoribosyl pyrophosphate as substrates. This chain is Soluble inorganic pyrophosphatase 4, found in Arabidopsis thaliana (Mouse-ear cress).